The primary structure comprises 334 residues: Putative B3 domain-containing protein At5g66980 (334 aa).

2 consecutive DNA-binding regions (TF-B3) follow at residues 8-105 and 218-317; these read LQFF…FAND and HPHF…VSGR.

The protein resides in the nucleus. The chain is Putative B3 domain-containing protein At5g66980 from Arabidopsis thaliana (Mouse-ear cress).